Consider the following 189-residue polypeptide: Peptide deformylase (189 aa).

Fe cation contacts are provided by Cys98 and His140. Glu141 is an active-site residue. His144 provides a ligand contact to Fe cation.

The protein belongs to the polypeptide deformylase family. It depends on Fe(2+) as a cofactor.

It carries out the reaction N-terminal N-formyl-L-methionyl-[peptide] + H2O = N-terminal L-methionyl-[peptide] + formate. Functionally, removes the formyl group from the N-terminal Met of newly synthesized proteins. Requires at least a dipeptide for an efficient rate of reaction. N-terminal L-methionine is a prerequisite for activity but the enzyme has broad specificity at other positions. This chain is Peptide deformylase, found in Porphyromonas gingivalis (strain ATCC 33277 / DSM 20709 / CIP 103683 / JCM 12257 / NCTC 11834 / 2561).